A 758-amino-acid polypeptide reads, in one-letter code: Vitamin K-dependent gamma-carboxylase (758 aa).

The segment at 1 to 22 (MAVSAGSARTSPSSDKVQKDKA) is disordered. N-acetylalanine is present on alanine 2. Topologically, residues 2–60 (AVSAGSARTSPSSDKVQKDKAELISGPRQDSRIGKLLGFEWTDLSSWRRLVTLLNRPTD) are cytoplasmic. The helical transmembrane segment at 61–81 (PASLAVFRFLFGFLMVLDIPQ) threads the bilayer. The Lumenal segment spans residues 82-113 (ERGLSSLDRKYLDGLDVCRFPLLDALRPLPLD). A disulfide bridge connects residues cysteine 99 and cysteine 450. A helical membrane pass occupies residues 114-134 (WMYLVYTIMFLGALGMMLGLC). Topologically, residues 135–136 (YR) are cytoplasmic. The chain crosses the membrane as a helical span at residues 137–157 (ISCVLFLLPYWYVFLLDKTSW). At 158-292 (NNHSYLYGLL…VSYFHCMNSQ (135 aa)) the chain is on the lumenal side. The active-site Proton acceptor is the lysine 218. Residues 293-313 (LFSIGMFSYVMLASSPLFCSP) form a helical membrane-spanning segment. Residues 314–361 (EWPRKLVSYCPRRLQQLLPLKAAPQPSVSCVYKRSRGKSGQKPGLRHQ) lie on the Cytoplasmic side of the membrane. Residues 362-382 (LGAAFTLLYLLEQLFLPYSHF) traverse the membrane as a helical segment. Over 383 to 758 (LTQGYNNWTN…SNPDPVHSEF (376 aa)) the chain is Lumenal. 2 N-linked (GlcNAc...) asparagine glycosylation sites follow: asparagine 459 and asparagine 550. Residues 732 to 758 (GELNPSNTDSSHSNPPESNPDPVHSEF) form a disordered region. Positions 735 to 747 (NPSNTDSSHSNPP) are enriched in polar residues.

This sequence belongs to the vitamin K-dependent gamma-carboxylase family. Monomer. May interact with CALU.

It localises to the endoplasmic reticulum membrane. The enzyme catalyses 4-carboxy-L-glutamyl-[protein] + 2,3-epoxyphylloquinone + H2O + H(+) = phylloquinol + L-glutamyl-[protein] + CO2 + O2. Mediates the vitamin K-dependent carboxylation of glutamate residues to calcium-binding gamma-carboxyglutamate (Gla) residues with the concomitant conversion of the reduced hydroquinone form of vitamin K to vitamin K epoxide. Catalyzes gamma-carboxylation of various proteins, such as blood coagulation factors (F2, F7, F9 and F10), osteocalcin (BGLAP) or matrix Gla protein (MGP). The polypeptide is Vitamin K-dependent gamma-carboxylase (GGCX) (Homo sapiens (Human)).